The following is a 753-amino-acid chain: Polyribonucleotide nucleotidyltransferase (753 aa).

Mg(2+)-binding residues include D543 and D549. The region spanning 609–668 (PRITTVKIPVAKIGELIGPKGKNINALTEETGANISIEDDGTVFISAADGASAEAAIEKI) is the KH domain. In terms of domain architecture, S1 motif spans 680–749 (GERFLGTVVK…NRGKISLVPV (70 aa)).

The protein belongs to the polyribonucleotide nucleotidyltransferase family. Requires Mg(2+) as cofactor.

The protein localises to the cytoplasm. It carries out the reaction RNA(n+1) + phosphate = RNA(n) + a ribonucleoside 5'-diphosphate. Involved in mRNA degradation. Catalyzes the phosphorolysis of single-stranded polyribonucleotides processively in the 3'- to 5'-direction. The polypeptide is Polyribonucleotide nucleotidyltransferase (Corynebacterium glutamicum (strain R)).